We begin with the raw amino-acid sequence, 1198 residues long: MTKKPGGPGKNRAINMLKRGLPRVFPLVGVKRVVMSLLDGRGPVRFVLALITFFKFTALAPTKALLGRWKAVEKSVAMKHLTSFKRELGTLIDAVNKRGRKQNKRGGNEGSIMWLASLAVVIACAGAMKLSNFQGKLLMTINNTDIADVIVIPTSKGENRCWVRAIDVGYMCEDTITYECPKLTMGNDPEDVDCWCDNQEVYVQYGRCTRTRHSKRSRRSVSVQTHGESSLVNKKEAWLDSTKATRYLMKTENWIIRNPGYAFLAAVLGWMLGSNNGQRVVFTILLLLVAPAYSFNCLGMGNRDFIEGASGATWVDLVLEGDSCLTIMANDKPTLDVRMINIEASQLAEVRSYCYHASVTDISTVARCPTTGEAHNEKRADSSYVCKQGFTDRGWGNGCGLFGKGSIDTCAKFSCTSKAIGRTIQPENIKYEVGIFVHGTTTSENHGNYSAQVGASQAAKFTVTPNAPSITLKLGDYGEVTLDCEPRSGLNTEAFYVMTVGSKSFLVHREWFHDLALPWTSPSSTAWRNRELLMEFEGAHATKQSVVALGSQEGGLHQALAGAIVVEYSSSVKLTSGHLKCRLKMDKLALKGTTYGMCTEKFSFAKNPVDTGHGTVVIELSYSGSDGPCKIPIVSVASLNDMTPVGRLVTVNPFVATSSANSKVLVEMEPPFGDSYIVVGRGDKQINHHWHKAGSTLGKAFSTTLKGAQRLAALGDTAWDFGSIGGVFNSIGRAVHQVFGGAFRTLFGGMSWITQGLMGALLLWMGVNARDRSIALAFLATGGVLVFLATNVHADTGCAIDITRKEMRCGSGIFVHNDVEAWVDRYKYLPETPRSLAKIVHKAHKEGVCGVRSVTRLEHQMWEAVRDELNVLLKENAVDLSVVVNKPVGRYRSAPKRLSMTQEKFEMGWKAWGKSILFAPELANSTFVVDGPETKECPDEHRAWNSMQIEDFGFGITSTRVWLKIREESTDECDGAIIGTAVKGHVAVHSDLSYWIESRYNDTWKLERAVFGEVKSCTWPETHTLWGDDVEESELIIPHTIAGPKSKHNRREGYKTQNQGPWDENGIVLDFDYCPGTKVTITEDCSKRGPSVRTTTDSGKLITDWCCRSCSLPPLRFRTENGCWYGMEIRPVMHDETTLVRSQVDAFKGEMVDPFSAGPSGDVSGHPGSPSQEVDGQIDHSCGFGGPTCADAWGYHLH.

The interval 2–15 is interaction with host EXOC1; it reads TKKPGGPGKNRAIN. Residues 37–72 are hydrophobic; homodimerization of capsid protein C; the sequence is LLDGRGPVRFVLALITFFKFTALAPTKALLGRWKAV. The propeptide at 106–127 is ER anchor for the capsid protein C, removed in mature form by serine protease NS3; it reads GGNEGSIMWLASLAVVIACAGA. A helical transmembrane segment spans residues 110–130; sequence GSIMWLASLAVVIACAGAMKL. Asn142 carries an N-linked (GlcNAc...) asparagine; by host glycan. 2 consecutive transmembrane segments (helical) span residues 254-274 and 280-294; these read WIIRNPGYAFLAAVLGWMLGS and VVFTILLLLVAPAYS. 6 cysteine pairs are disulfide-bonded: Cys297-Cys324, Cys354-Cys410, Cys354-Cys415, Cys368-Cys399, Cys386-Cys410, and Cys386-Cys415. Residues 392–405 form a fusion peptide region; sequence DRGWGNGCGLFGKG. Asn448 carries N-linked (GlcNAc...) asparagine; by host glycosylation. Disulfide bonds link Cys484-Cys581 and Cys598-Cys629. 2 helical membrane-spanning segments follow: residues 747 to 767 and 774 to 794; these read FGGMSWITQGLMGALLLWMGV and IALAFLATGGVLVFLATNVHA. 6 cysteine pairs are disulfide-bonded: Cys798–Cys809, Cys849–Cys937, Cys973–Cys1017, Cys1074–Cys1123, Cys1085–Cys1106, and Cys1107–Cys1110. N-linked (GlcNAc...) asparagine; by host glycosylation is found at Asn924 and Asn1001. The interval 1151 to 1177 is disordered; the sequence is MVDPFSAGPSGDVSGHPGSPSQEVDGQ.

As to quaternary structure, homodimer. Interacts (via N-terminus) with host EXOC1 (via C-terminus); this interaction results in EXOC1 degradation through the proteasome degradation pathway. Interacts with host CAPRIN1; this interaction is involved in the suppression of the integrated stress response. In terms of assembly, forms heterodimers with envelope protein E in the endoplasmic reticulum and Golgi. Homodimer; in the endoplasmic reticulum and Golgi. Interacts with protein prM. Interacts with non-structural protein 1. Genome polyprotein: Specific enzymatic cleavages in vivo yield mature proteins. Cleavages in the lumen of endoplasmic reticulum are performed by host signal peptidase, whereas cleavages in the cytoplasmic side are performed by serine protease NS3. Signal cleavage at the 2K-4B site requires a prior NS3 protease-mediated cleavage at the 4A-2K site. In terms of processing, cleaved in post-Golgi vesicles by a host furin, releasing the mature small envelope protein M, and peptide pr. This cleavage is incomplete as up to 30% of viral particles still carry uncleaved prM. Post-translationally, N-glycosylated.

It is found in the secreted. It localises to the virion membrane. The protein resides in the host endoplasmic reticulum membrane. In terms of biological role, plays a role in virus budding by binding to the cell membrane and gathering the viral RNA into a nucleocapsid that forms the core of a mature virus particle. During virus entry, may induce genome penetration into the host cytoplasm after hemifusion induced by the surface proteins. Can migrate to the cell nucleus where it modulates host functions. Overcomes the anti-viral effects of host EXOC1 by sequestering and degrading the latter through the proteasome degradation pathway. Inhibits the integrated stress response (ISR) in the infected cell by binding to host CAPRIN1. Functionally, inhibits RNA silencing by interfering with host Dicer. Prevents premature fusion activity of envelope proteins in trans-Golgi by binding to envelope protein E at pH6.0. After virion release in extracellular space, gets dissociated from E dimers. Its function is as follows. Acts as a chaperone for envelope protein E during intracellular virion assembly by masking and inactivating envelope protein E fusion peptide. prM is the only viral peptide matured by host furin in the trans-Golgi network probably to avoid catastrophic activation of the viral fusion activity in acidic Golgi compartment prior to virion release. prM-E cleavage is inefficient, and many virions are only partially matured. These uncleaved prM would play a role in immune evasion. In terms of biological role, may play a role in virus budding. Exerts cytotoxic effects by activating a mitochondrial apoptotic pathway through M ectodomain. May display a viroporin activity. Functionally, binds to host cell surface receptor and mediates fusion between viral and cellular membranes. Envelope protein is synthesized in the endoplasmic reticulum in the form of heterodimer with protein prM. They play a role in virion budding in the ER, and the newly formed immature particle is covered with 60 spikes composed of heterodimer between precursor prM and envelope protein E. The virion is transported to the Golgi apparatus where the low pH causes dissociation of PrM-E heterodimers and formation of E homodimers. prM-E cleavage is inefficient, and many virions are only partially matured. These uncleaved prM would play a role in immune evasion. May play a role in neuroinvasiveness. In Ardeidae (herons), this protein is Structural polyprotein.